The sequence spans 312 residues: Gamma-soluble NSF attachment protein (312 aa).

Residues 281–312 form a disordered region; it reads KKKAAAPPQAKPEGTAAPAAEEEEDEYAGGLC. The segment covering 285 to 299 has biased composition (low complexity); the sequence is AAPPQAKPEGTAAPA. Acidic residues predominate over residues 300–312; it reads AEEEEDEYAGGLC.

Belongs to the SNAP family. In terms of assembly, interacts with RAB11FIP5. Interacts with VTI1A.

The protein localises to the membrane. The protein resides in the golgi apparatus. In terms of biological role, required for vesicular transport between the endoplasmic reticulum and the Golgi apparatus. This chain is Gamma-soluble NSF attachment protein, found in Bos taurus (Bovine).